The chain runs to 337 residues: tRNA N6-adenosine threonylcarbamoyltransferase (337 aa).

Residues His-111 and His-115 each coordinate Fe cation. Substrate contacts are provided by residues 134–138 (LVSGG), Asp-167, Gly-180, and Asn-272. Asp-300 lines the Fe cation pocket.

It belongs to the KAE1 / TsaD family. Fe(2+) is required as a cofactor.

It is found in the cytoplasm. It carries out the reaction L-threonylcarbamoyladenylate + adenosine(37) in tRNA = N(6)-L-threonylcarbamoyladenosine(37) in tRNA + AMP + H(+). In terms of biological role, required for the formation of a threonylcarbamoyl group on adenosine at position 37 (t(6)A37) in tRNAs that read codons beginning with adenine. Is involved in the transfer of the threonylcarbamoyl moiety of threonylcarbamoyl-AMP (TC-AMP) to the N6 group of A37, together with TsaE and TsaB. TsaD likely plays a direct catalytic role in this reaction. The chain is tRNA N6-adenosine threonylcarbamoyltransferase from Escherichia coli (strain K12 / MC4100 / BW2952).